The following is a 289-amino-acid chain: Stress response regulator protein 1 (289 aa).

The interval 77 to 136 (LDCTNSEMDEEDDFEDDEDDENLGLINPLHHKSSHGQISDYSPLTPFTEPPSASLSKPSF) is disordered. A compositionally biased stretch (acidic residues) spans 83-98 (EMDEEDDFEDDEDDEN). Positions 127–136 (PSASLSKPSF) are enriched in polar residues. Residues 163-281 (NFLIVDDNII…YDFVMDRIDE (119 aa)) enclose the Response regulatory domain. A 4-aspartylphosphate modification is found at D214.

Its function is as follows. Required for stress adaptation, morphogenesis and virulence. This chain is Stress response regulator protein 1 (SRR1), found in Scheffersomyces stipitis (strain ATCC 58785 / CBS 6054 / NBRC 10063 / NRRL Y-11545) (Yeast).